The primary structure comprises 324 residues: Meiotic recombination protein DLH1 (324 aa).

112–119 (GEFRCGKT) is an ATP binding site. A dsDNA-binding site is contributed by Arg-214. SsDNA-binding residues include Arg-214, Tyr-217, Arg-220, Arg-226, and Arg-296. 2 residues coordinate dsDNA: Arg-220 and Arg-226.

This sequence belongs to the RecA family. DMC1 subfamily. As to quaternary structure, double stacked ring-shaped homooctamer.

The protein resides in the nucleus. Functionally, required for meiotic recombination, synaptonemal complex formation and cell cycle progression. The polypeptide is Meiotic recombination protein DLH1 (DLH1) (Candida albicans (Yeast)).